The following is a 396-amino-acid chain: MIELLFLLLPIAAAYGWYMGRRSAKKDQDDISNKLSRDYVTGVNFLLSNQTDKAVDLFLDMLQKQEIENEIESHSQFEAELTLGNLFRSRGEVDRALRIHQALDLSPNYTFEQKLLAKQQLARDFMVVGFFDRAENLYILLVDEPEFAENALQQLLVIYQKTKEWKKAVNIAEKLAKIKPQENNIELAQCYCEYSQSLEPESAVEKRSVLQKALSVSPTCVRASLLLANLAMLDGQYQQAVKILENVLEQNPDYTGEILLPLKHCYEELNQLDNFELFLIRAGQIINNDEVELALAKLIEEKDGKSAAQAKLYQQLTKKPSTLIFHRFMQYQIDDAEDGRGKESLILLHKMVGERIKQTSPYRCTNCGYQIHKLLWNCPSCRQWESIKPVSNQEHN.

Residues 1–20 (MIELLFLLLPIAAAYGWYMG) form a helical membrane-spanning segment. The Cytoplasmic segment spans residues 21–396 (RRSAKKDQDD…IKPVSNQEHN (376 aa)). 4 TPR repeats span residues 35-68 (LSRDYVTGVNFLLSNQTDKAVDLFLDMLQKQEIE), 77-109 (FEAELTLGNLFRSRGEVDRALRIHQALDLSPNY), 149-182 (ENALQQLLVIYQKTKEWKKAVNIAEKLAKIKPQE), and 221-254 (VRASLLLANLAMLDGQYQQAVKILENVLEQNPDY). Residues C364, C367, C378, and C381 each coordinate Fe cation.

Belongs to the LapB family.

Its subcellular location is the cell inner membrane. In terms of biological role, modulates cellular lipopolysaccharide (LPS) levels by regulating LpxC, which is involved in lipid A biosynthesis. May act by modulating the proteolytic activity of FtsH towards LpxC. May also coordinate assembly of proteins involved in LPS synthesis at the plasma membrane. The polypeptide is Lipopolysaccharide assembly protein B (Haemophilus influenzae (strain ATCC 51907 / DSM 11121 / KW20 / Rd)).